Here is a 59-residue protein sequence, read N- to C-terminus: UPF0434 protein SO_2800 (59 aa).

Belongs to the UPF0434 family.

The polypeptide is UPF0434 protein SO_2800 (Shewanella oneidensis (strain ATCC 700550 / JCM 31522 / CIP 106686 / LMG 19005 / NCIMB 14063 / MR-1)).